Here is a 648-residue protein sequence, read N- to C-terminus: Biosynthetic arginine decarboxylase (648 aa).

K109 is modified (N6-(pyridoxal phosphate)lysine). 291 to 301 (LDVGGGLGVDY) provides a ligand contact to substrate.

This sequence belongs to the Orn/Lys/Arg decarboxylase class-II family. SpeA subfamily. Requires Mg(2+) as cofactor. The cofactor is pyridoxal 5'-phosphate.

It carries out the reaction L-arginine + H(+) = agmatine + CO2. The protein operates within amine and polyamine biosynthesis; agmatine biosynthesis; agmatine from L-arginine: step 1/1. Its function is as follows. Catalyzes the biosynthesis of agmatine from arginine. The chain is Biosynthetic arginine decarboxylase from Prochlorococcus marinus (strain MIT 9303).